A 253-amino-acid polypeptide reads, in one-letter code: Proteasome subunit alpha type-3 (253 aa).

The disordered stretch occupies residues 230–253; that stretch reads ELTEKARKAGDAANKDEDSDNETH. Positions 231–253 are enriched in basic and acidic residues; it reads LTEKARKAGDAANKDEDSDNETH. Ser248 carries the phosphoserine modification.

Belongs to the peptidase T1A family. In terms of assembly, the 26S proteasome consists of a 20S proteasome core and two 19S regulatory subunits. The 20S proteasome core is composed of 28 subunits that are arranged in four stacked rings, resulting in a barrel-shaped structure. The two end rings are each formed by seven alpha subunits, and the two central rings are each formed by seven beta subunits. The catalytic chamber with the active sites is on the inside of the barrel. Interacts with ntc.

It localises to the cytoplasm. The protein resides in the nucleus. The proteasome is a multicatalytic proteinase complex which is characterized by its ability to cleave peptides with Arg, Phe, Tyr, Leu, and Glu adjacent to the leaving group at neutral or slightly basic pH. The proteasome has an ATP-dependent proteolytic activity. This Drosophila melanogaster (Fruit fly) protein is Proteasome subunit alpha type-3 (Prosalpha7).